We begin with the raw amino-acid sequence, 388 residues long: Norsolorinic acid reductase (388 aa).

Catalysis depends on Tyr74, which acts as the Proton donor. 233–243 is an NADP(+) binding site; that stretch reads GVLGRGQFRSA.

It belongs to the aldo/keto reductase family. Aldo/keto reductase 2 subfamily.

It functions in the pathway mycotoxin biosynthesis; aflatoxin biosynthesis. This Aspergillus flavus (strain ATCC 200026 / FGSC A1120 / IAM 13836 / NRRL 3357 / JCM 12722 / SRRC 167) protein is Norsolorinic acid reductase (norA).